The chain runs to 209 residues: Ribosomal RNA small subunit methyltransferase G (209 aa).

S-adenosyl-L-methionine-binding positions include Gly-77, Met-82, 128 to 129, and Arg-143; that span reads VE.

Belongs to the methyltransferase superfamily. RNA methyltransferase RsmG family.

It is found in the cytoplasm. It carries out the reaction guanosine(527) in 16S rRNA + S-adenosyl-L-methionine = N(7)-methylguanosine(527) in 16S rRNA + S-adenosyl-L-homocysteine. Functionally, specifically methylates the N7 position of guanine in position 527 of 16S rRNA. This chain is Ribosomal RNA small subunit methyltransferase G, found in Chromobacterium violaceum (strain ATCC 12472 / DSM 30191 / JCM 1249 / CCUG 213 / NBRC 12614 / NCIMB 9131 / NCTC 9757 / MK).